The following is an 805-amino-acid chain: Mitochondrial intermediate peptidase (805 aa).

A mitochondrion-targeting transit peptide spans 1 to 25; it reads MIQPLVKASRPRLWVCSDCLLRRTL. Histidine 578 contacts Zn(2+). Residue glutamate 579 is part of the active site. Residues histidine 582 and histidine 585 each coordinate Zn(2+).

This sequence belongs to the peptidase M3 family. The cofactor is Zn(2+).

It is found in the mitochondrion matrix. The enzyme catalyses Release of an N-terminal octapeptide as second stage of processing of some proteins imported into the mitochondrion.. Cleaves proteins, imported into the mitochondrion, to their mature size. While most mitochondrial precursor proteins are processed to the mature form in one step by mitochondrial processing peptidase (MPP), the sequential cleavage by MIP of an octapeptide after initial processing by MPP is a required step for a subgroup of nuclear-encoded precursor proteins destined for the matrix or the inner membrane. This chain is Mitochondrial intermediate peptidase (oct-1), found in Neurospora crassa (strain ATCC 24698 / 74-OR23-1A / CBS 708.71 / DSM 1257 / FGSC 987).